The primary structure comprises 432 residues: Aspartate aminotransferase (432 aa).

Residue 45–46 (RG) participates in substrate binding. 109 to 111 (SSL) serves as a coordination point for pyridoxal 5'-phosphate. Residue 148-150 (YDR) coordinates substrate. Pyridoxal 5'-phosphate is bound by residues Asn197, Tyr229, and 262–265 (STSK). Arg400 lines the substrate pocket.

The protein belongs to the class-I pyridoxal-phosphate-dependent aminotransferase family. In terms of assembly, homodimer. Pyridoxal 5'-phosphate serves as cofactor.

The catalysed reaction is L-aspartate + 2-oxoglutarate = oxaloacetate + L-glutamate. This is Aspartate aminotransferase from Corynebacterium glutamicum (strain ATCC 13032 / DSM 20300 / JCM 1318 / BCRC 11384 / CCUG 27702 / LMG 3730 / NBRC 12168 / NCIMB 10025 / NRRL B-2784 / 534).